Consider the following 144-residue polypeptide: Large ribosomal subunit protein uL15 (144 aa).

The disordered stretch occupies residues 1-53 (MRLNTLSPAEGAKHSAKRLGRGIGSGLGKTGGRGHKGQKSRTGGGVRRGFEGG). The span at 21–31 (RGIGSGLGKTG) shows a compositional bias: gly residues.

This sequence belongs to the universal ribosomal protein uL15 family. As to quaternary structure, part of the 50S ribosomal subunit.

Binds to the 23S rRNA. This Pasteurella multocida (strain Pm70) protein is Large ribosomal subunit protein uL15.